A 138-amino-acid chain; its full sequence is Putative pre-16S rRNA nuclease (138 aa).

This sequence belongs to the YqgF nuclease family.

The protein resides in the cytoplasm. Its function is as follows. Could be a nuclease involved in processing of the 5'-end of pre-16S rRNA. The polypeptide is Putative pre-16S rRNA nuclease (Salmonella schwarzengrund (strain CVM19633)).